The following is a 246-amino-acid chain: uncharacterized protein (246 aa).

The next 4 membrane-spanning stretches (helical) occupy residues 32 to 52, 69 to 89, 121 to 141, and 146 to 166; these read TLFF…VGFI, IIAI…MCPF, IYFK…GVKI, and LAYL…MFFC. 4Fe-4S ferredoxin-type domains follow at residues 185-213 and 210-239; these read FKLK…ITEK and ITEK…FSAF. The [4Fe-4S] cluster site is built by Cys-194, Cys-197, Cys-200, Cys-204, Cys-219, Cys-222, Cys-225, and Cys-229.

Its subcellular location is the cell membrane. This is an uncharacterized protein from Methanocaldococcus jannaschii (strain ATCC 43067 / DSM 2661 / JAL-1 / JCM 10045 / NBRC 100440) (Methanococcus jannaschii).